A 121-amino-acid chain; its full sequence is Large ribosomal subunit protein bL12 (121 aa).

This sequence belongs to the bacterial ribosomal protein bL12 family. In terms of assembly, homodimer. Part of the ribosomal stalk of the 50S ribosomal subunit. Forms a multimeric L10(L12)X complex, where L10 forms an elongated spine to which 2 to 4 L12 dimers bind in a sequential fashion. Binds GTP-bound translation factors.

In terms of biological role, forms part of the ribosomal stalk which helps the ribosome interact with GTP-bound translation factors. Is thus essential for accurate translation. The chain is Large ribosomal subunit protein bL12 from Serratia proteamaculans (strain 568).